A 578-amino-acid chain; its full sequence is Adhesion G protein-coupled receptor A1 (578 aa).

The Extracellular segment spans residues 1-22 (MTQWDLKTVLSLPQYPGEFLHP). A helical membrane pass occupies residues 23–43 (VVYACTAVMLLCLLASVITYI). At 44-56 (LHQSAIRISRKGR) the chain is on the cytoplasmic side. Residues 57–77 (HALLNFCFHAALTFTVFAGGI) form a helical membrane-spanning segment. Topologically, residues 78 to 87 (NRTQHPILCQ) are extracellular. A helical transmembrane segment spans residues 88–108 (AVGIALHYSTLSTMLWIGVTA). At 109 to 137 (RNIYKQVTKKALPCPGADQPPYPKQPLLR) the chain is on the cytoplasmic side. The helical transmembrane segment at 138-158 (FYLISGGVPFIICGVTAATNI) threads the bilayer. Topologically, residues 159 to 178 (RNYGTEDEDVAYCWMAWEPS) are extracellular. Residues 179-199 (LGAFYGPAAFIALVTCVYFLC) form a helical membrane-spanning segment. Residues 200 to 262 (TYVQLRRHPE…NEHSFKAQLR (63 aa)) lie on the Cytoplasmic side of the membrane. Positions 216 to 236 (ERTEEQQRLAVPESGHRHGVR) are disordered. Residues 263–283 (AAAFTLFLFTATWTFGALAVS) traverse the membrane as a helical segment. The Extracellular portion of the chain corresponds to 284–289 (QGHFLD). A helical membrane pass occupies residues 290–310 (MIFSCLYGAFCVTLGLFVLIH). Disordered stretches follow at residues 463-486 (PSSL…EGPM) and 537-578 (SLPF…ETTV). Residues 469–481 (SPHSSRSESPTSS) are compositionally biased toward low complexity. Residues 537–548 (SLPFGGPSQNGL) are compositionally biased toward polar residues.

The protein belongs to the G-protein coupled receptor 2 family. Adhesion G-protein coupled receptor (ADGR) subfamily. In terms of tissue distribution, predominantly expressed in CNS.

The protein resides in the membrane. This chain is Adhesion G protein-coupled receptor A1, found in Mus musculus (Mouse).